A 142-amino-acid chain; its full sequence is Large ribosomal subunit protein uL11 (142 aa).

It belongs to the universal ribosomal protein uL11 family. Part of the ribosomal stalk of the 50S ribosomal subunit. Interacts with L10 and the large rRNA to form the base of the stalk. L10 forms an elongated spine to which L12 dimers bind in a sequential fashion forming a multimeric L10(L12)X complex. Post-translationally, one or more lysine residues are methylated.

In terms of biological role, forms part of the ribosomal stalk which helps the ribosome interact with GTP-bound translation factors. The protein is Large ribosomal subunit protein uL11 of Gamma-proteobacterium EBAC31A08.